We begin with the raw amino-acid sequence, 1081 residues long: SPX and EXS domain-containing protein 4 (1081 aa).

The SPX domain occupies M1 to Y483. Disordered regions lie at residues E86–F118, Q160–N271, and V318–N354. 3 stretches are compositionally biased toward low complexity: residues S90–N110, R161–I196, and S211–P228. Residues K244–E264 are compositionally biased toward acidic residues. Over residues K319–N336 the composition is skewed to basic and acidic residues. Over residues N337–L349 the composition is skewed to low complexity. The next 9 membrane-spanning stretches (helical) occupy residues N536–F556, L573–L593, Y622–D642, I654–I674, F703–V723, I776–L796, W803–Y823, W854–F874, and P887–F907. Residues F738 to E940 enclose the EXS domain. The segment at D939–G1031 is disordered. Residues K942 to Q951 show a composition bias toward basic residues. Residues S952–N970 are compositionally biased toward low complexity. Polar residues predominate over residues S977–T1003. The segment covering N1013–I1022 has biased composition (basic and acidic residues).

It belongs to the SYG1 (TC 2.A.94) family.

It localises to the membrane. The polypeptide is SPX and EXS domain-containing protein 4 (Dictyostelium discoideum (Social amoeba)).